A 190-amino-acid chain; its full sequence is UPF0301 protein DP2218 (190 aa).

The protein belongs to the UPF0301 (AlgH) family.

The sequence is that of UPF0301 protein DP2218 from Desulfotalea psychrophila (strain LSv54 / DSM 12343).